A 175-amino-acid chain; its full sequence is Small ribosomal subunit protein uS5 (175 aa).

The disordered stretch occupies residues Met-1–Arg-21. The region spanning Met-20–Val-83 is the S5 DRBM domain.

This sequence belongs to the universal ribosomal protein uS5 family. In terms of assembly, part of the 30S ribosomal subunit. Contacts proteins S4 and S8.

Its function is as follows. With S4 and S12 plays an important role in translational accuracy. In terms of biological role, located at the back of the 30S subunit body where it stabilizes the conformation of the head with respect to the body. The polypeptide is Small ribosomal subunit protein uS5 (Dechloromonas aromatica (strain RCB)).